A 171-amino-acid chain; its full sequence is Co-chaperone protein HscB (171 aa).

The J domain maps to 2-74; it reads DYFTLFGLPA…LTRAEYLLSL (73 aa).

This sequence belongs to the HscB family. In terms of assembly, interacts with HscA and stimulates its ATPase activity. Interacts with IscU.

In terms of biological role, co-chaperone involved in the maturation of iron-sulfur cluster-containing proteins. Seems to help targeting proteins to be folded toward HscA. This Salmonella schwarzengrund (strain CVM19633) protein is Co-chaperone protein HscB.